The following is a 465-amino-acid chain: Soluble pyridine nucleotide transhydrogenase (465 aa).

Position 36-45 (36-45 (ERYNNVGGGC)) interacts with FAD.

It belongs to the class-I pyridine nucleotide-disulfide oxidoreductase family. It depends on FAD as a cofactor.

It localises to the cytoplasm. It catalyses the reaction NAD(+) + NADPH = NADH + NADP(+). Functionally, conversion of NADPH, generated by peripheral catabolic pathways, to NADH, which can enter the respiratory chain for energy generation. In Serratia proteamaculans (strain 568), this protein is Soluble pyridine nucleotide transhydrogenase.